Consider the following 783-residue polypeptide: Metabotropic glutamate receptor-like protein J (783 aa).

Positions 1–20 (MKILLYIAIILSFFSLITIS) are cleaved as a signal peptide. The Extracellular portion of the chain corresponds to 21-383 (SECKIAVLLS…DYPNSLKYGV (363 aa)). A coiled-coil region spans residues 56–85 (DFSIYYENLEESMEEAEKAFQDALHKGANL). Asn181, Asn196, Asn256, Asn282, and Asn315 each carry an N-linked (GlcNAc...) asparagine glycan. A helical transmembrane segment spans residues 384–404 (TIVSGVCIFICLVCMTLVVVF). Residues 405–415 (KKARVIKSSSP) lie on the Cytoplasmic side of the membrane. The helical transmembrane segment at 416-436 (AFLLLILLGCCIIFAACILFA) threads the bilayer. Residues 437-443 (QSPTNQT) are Extracellular-facing. Asn441 is a glycosylation site (N-linked (GlcNAc...) asparagine). A helical transmembrane segment spans residues 444–464 (CSARIWLLSLGYTLFLGNLLV). The Cytoplasmic portion of the chain corresponds to 465-489 (KNWRIWLLFDNPKLKKRAITNWKLY). Residues 490 to 510 (PWVFAILAIDVMILAIWQGLG) form a helical membrane-spanning segment. The Extracellular segment spans residues 511–538 (NINAESRIGYDSLTQYQYKNVCSSDDQG). The chain crosses the membrane as a helical span at residues 539-559 (SIALYLLLVFHGLVLLVACFI). Residues 560–575 (SFKIKVVDIEEFNESK) lie on the Cytoplasmic side of the membrane. Residues 576–596 (PITTSVYIITFCLFIVIPLMV) traverse the membrane as a helical segment. The Extracellular portion of the chain corresponds to 597 to 604 (SPQSLTSQ). A helical transmembrane segment spans residues 605–625 (TTIICVCAIVTTLISMLLLFG). At 626 to 783 (SKFYKMATQG…GETEIDSNNV (158 aa)) the chain is on the cytoplasmic side. Over residues 647 to 656 (KSSSKSSKSS) the composition is skewed to low complexity. 2 disordered regions span residues 647-696 (KSSS…FSNK) and 731-783 (QLQQ…SNNV). Residues 670–679 (GEDDTSDETS) show a composition bias toward acidic residues. The segment covering 763-783 (VLSKRISNQQNGETEIDSNNV) has biased composition (polar residues).

The protein in the N-terminal section; belongs to the BMP lipoprotein family. It in the C-terminal section; belongs to the G-protein coupled receptor 3 family. GABA-B receptor subfamily.

The protein resides in the cell membrane. Its subcellular location is the membrane. The protein localises to the endoplasmic reticulum membrane. It is found in the golgi apparatus membrane. It localises to the nucleus envelope. Functionally, may act during the development and be a negative regulator. The protein is Metabotropic glutamate receptor-like protein J (grlJ) of Dictyostelium discoideum (Social amoeba).